A 179-amino-acid chain; its full sequence is Large ribosomal subunit protein uL5 (179 aa).

Belongs to the universal ribosomal protein uL5 family. In terms of assembly, part of the 50S ribosomal subunit; part of the 5S rRNA/L5/L18/L25 subcomplex. Contacts the 5S rRNA and the P site tRNA. Forms a bridge to the 30S subunit in the 70S ribosome.

In terms of biological role, this is one of the proteins that bind and probably mediate the attachment of the 5S RNA into the large ribosomal subunit, where it forms part of the central protuberance. In the 70S ribosome it contacts protein S13 of the 30S subunit (bridge B1b), connecting the 2 subunits; this bridge is implicated in subunit movement. Contacts the P site tRNA; the 5S rRNA and some of its associated proteins might help stabilize positioning of ribosome-bound tRNAs. The polypeptide is Large ribosomal subunit protein uL5 (Shewanella sp. (strain MR-4)).